The chain runs to 111 residues: uncharacterized protein (111 aa).

Residues 27-47 form a helical membrane-spanning segment; the sequence is HLFHFPSISFFFFFFFFFFSF.

The protein localises to the membrane. This is an uncharacterized protein from Saccharomyces cerevisiae (strain ATCC 204508 / S288c) (Baker's yeast).